The primary structure comprises 267 residues: Energy-coupling factor transporter transmembrane protein EcfT (267 aa).

5 consecutive transmembrane segments (helical) span residues 30-50 (FWYV…LLVA), 67-87 (WAGL…QVLF), 110-130 (ALVI…LTAT), 152-172 (VPVN…PTIM), and 247-267 (SIAL…RILL).

It belongs to the energy-coupling factor EcfT family. Forms a stable energy-coupling factor (ECF) transporter complex composed of 2 membrane-embedded substrate-binding proteins (S component), 2 ATP-binding proteins (A component) and 2 transmembrane proteins (T component). May be able to interact with more than 1 S component at a time.

It localises to the cell membrane. Functionally, transmembrane (T) component of an energy-coupling factor (ECF) ABC-transporter complex. Unlike classic ABC transporters this ECF transporter provides the energy necessary to transport a number of different substrates. The protein is Energy-coupling factor transporter transmembrane protein EcfT of Limosilactobacillus fermentum (strain CECT 5716 / Lc40) (Lactobacillus fermentum).